Here is a 247-residue protein sequence, read N- to C-terminus: Coproheme decarboxylase (247 aa).

Residues Arg129, 143–147 (YPMDK), His170, Gln183, and Ser221 each bind Fe-coproporphyrin III. Residue Tyr143 is part of the active site.

It belongs to the ChdC family. Type 1 subfamily. It depends on Fe-coproporphyrin III as a cofactor.

It catalyses the reaction Fe-coproporphyrin III + 2 H2O2 + 2 H(+) = heme b + 2 CO2 + 4 H2O. The catalysed reaction is Fe-coproporphyrin III + H2O2 + H(+) = harderoheme III + CO2 + 2 H2O. The enzyme catalyses harderoheme III + H2O2 + H(+) = heme b + CO2 + 2 H2O. Its pathway is porphyrin-containing compound metabolism; protoheme biosynthesis. In terms of biological role, involved in coproporphyrin-dependent heme b biosynthesis. Catalyzes the decarboxylation of Fe-coproporphyrin III (coproheme) to heme b (protoheme IX), the last step of the pathway. The reaction occurs in a stepwise manner with a three-propionate intermediate. In Bacillus cereus (strain ATCC 10987 / NRS 248), this protein is Coproheme decarboxylase.